Consider the following 79-residue polypeptide: UPF0180 protein BcerKBAB4_1316 (79 aa).

It belongs to the UPF0180 family.

The sequence is that of UPF0180 protein BcerKBAB4_1316 from Bacillus mycoides (strain KBAB4) (Bacillus weihenstephanensis).